Here is a 992-residue protein sequence, read N- to C-terminus: MRKLFSFGRRLGQALLSSMDQEYAGPGYDIRDWELRKIHRAAIKGDAAEVERCLTRRFRDLDARDRKDRTVLHLACAHGRVQVVTLLLHRRCQIDICDRLNRTPLMKAVHSQEEACAIVLLECGANPNIEDIYGNTALHYAVYNKGTSLAERLLSHHANIEALNKEGNTPLLFAINSRRQHMVEFLLKNQANIHAVDNFKRTALILAVQHNLSSIVTLLLQQNIRISSQDMFGQTAEDYALCSDLRSIRQQILEHKNKMLKNHLRNDNQETAAMKPANLKKRKERAKAEHNLKVASEEKQERLQRSENKQPQDSQSYGKKKDAMYGNFMLKKDIAMLKEELYAIKNDSLRKEKKYIQEIKSITEINANFEKSVRLNEKMITKTVARYSQQLNDLKAENARLNSELEKEKHNKERLEAEVESLHSSLATAINEYNEIVERKDLELVLWRADDVSRHEKMGSNISQLTDKNELLTEQVHKARVKFNTLKGKLRETRDALREKTLALGSVQLDLRQAQHRIKEMKQMHPNGEAKESQSIGKQNSLEERIRQQELENLLLERQLEDARKEGDNKEIVINIHRDCLENGKEDLLEERNKELMKEYNYLKEKLLQCEKEKAEREVIVREFQEELVDHLKTFSISESPLEGTSHCHINLNETWTSKKKLFQVEIQPEEKHEEFRKLFELISLLNYTADQIRKKNRELEEEATGYKKCLEMTINMLNAFANEDFSCHGDLNTDQLKMDILFKKLKQKFNDLVAEKEAVSSECVNLAKDNEVLHQELLSMRNVQEKCEKLEKDKKMLEEEVLNLKTHMEKDMVELGKLQEYKSELDERAVQEIEKLEEIHLQKQAEYEKQLEQLNKDNTASLKKKELTLKDVECKFSKMKTAYEEVTTELEEFKEAFAGAVKANNSMSKKLMKSDKKIAVISTKLFTEKQRMKYFLSTLPTRPEPELPCVENLNSIELNRKYIPKTAIRIPTSNPQTSNNCKNFLTEVLLC.

ANK repeat units lie at residues 67 to 96, 100 to 129, 133 to 162, 166 to 195, and 199 to 228; these read KDRT…QIDI, LNRT…NPNI, YGNT…NIEA, EGNT…NIHA, and FKRT…RISS. The interval 262 to 320 is disordered; sequence NHLRNDNQETAAMKPANLKKRKERAKAEHNLKVASEEKQERLQRSENKQPQDSQSYGKK. 4 coiled-coil regions span residues 278-310, 378-618, 683-713, and 743-899; these read NLKK…ENKQ, KMIT…AERE, ISLL…CLEM, and FKKL…EAFA. The segment covering 286–310 has biased composition (basic and acidic residues); the sequence is AKAEHNLKVASEEKQERLQRSENKQ.

This chain is Ankyrin repeat domain-containing protein 18A (ANKRD18A), found in Homo sapiens (Human).